Here is a 298-residue protein sequence, read N- to C-terminus: Serine/threonine-protein kinase 1 (298 aa).

One can recognise a Protein kinase domain in the interval 38-276 (FIATRPMFEG…FKSLVSHPWF (239 aa)). Residues 45 to 53 (FEGGRNNVF) and K65 contribute to the ATP site. The Proton acceptor role is filled by D152.

Belongs to the protein kinase superfamily. Ser/Thr protein kinase family.

Its subcellular location is the virion. It is found in the host cytoplasm. It carries out the reaction L-seryl-[protein] + ATP = O-phospho-L-seryl-[protein] + ADP + H(+). It catalyses the reaction L-threonyl-[protein] + ATP = O-phospho-L-threonyl-[protein] + ADP + H(+). Functionally, essential for viral replication. It may mediate the virus' progression through DNA replication. This Ornithodoros (relapsing fever ticks) protein is Serine/threonine-protein kinase 1.